A 2500-amino-acid polypeptide reads, in one-letter code: Non-reducing polyketide synthase atr1 (2500 aa).

The N-terminal acylcarrier protein transacylase domain (SAT) stretch occupies residues 13 to 260 (VFSPQSKAPK…HNPENANLAL (248 aa)). Residues 385 to 808 (TDAVAVVGMA…GSNSAVLLCQ (424 aa)) enclose the Ketosynthase family 3 (KS3) domain. Catalysis depends on for beta-ketoacyl synthase activity residues C557, H692, and H731. Residues 908–1199 (MTFSGQSRQS…EFPERHTFLD (292 aa)) are malonyl-CoA:ACP transacylase (MAT) domain. S995 functions as the For acyl/malonyl transferase activity in the catalytic mechanism. The N-terminal hotdog fold stretch occupies residues 1286–1413 (PRLVEPRTKP…GDFGFTTQTQ (128 aa)). The region spanning 1286-1584 (PRLVEPRTKP…FTKLPITRLE (299 aa)) is the PKS/mFAS DH domain. The product template (PT) domain stretch occupies residues 1287–1583 (RLVEPRTKPS…QFTKLPITRL (297 aa)). H1317 (proton acceptor; for dehydratase activity) is an active-site residue. Residues 1433–1584 (SETLKSKRAY…FTKLPITRLE (152 aa)) are C-terminal hotdog fold. D1495 functions as the Proton donor; for dehydratase activity in the catalytic mechanism. The interval 1594–1649 (AHNTPILKSSQQDSIVSASSSSSTEHSDDDSEDDGSRSPSHSDTSVDSESEAPADN) is disordered. The segment covering 1602-1617 (SSQQDSIVSASSSSST) has biased composition (low complexity). Residues 1649–1725 (NGAAKKLKSL…RIVAPEMAAK (77 aa)) form the Carrier domain. Residue S1683 is modified to O-(pantetheine 4'-phosphoryl)serine. The segment at 2164–2496 (KSYRIETMPY…YEFIFDVVGR (333 aa)) is thioesterase (TE) domain. Active-site for thioesterase activity residues include S2285 and D2434.

It catalyses the reaction 6 malonyl-CoA + 2 acetyl-CoA + 2 S-adenosyl-L-methionine + 3 H(+) = 4-O-demethylbarbatate + 2 S-adenosyl-L-homocysteine + 6 CO2 + 8 CoA + H2O. The protein operates within secondary metabolite biosynthesis; terpenoid biosynthesis. Non-reducing polyketide synthase; part of the gene cluster that mediates the biosynthesis of atranorin, a depside of polyketide origin that accumulates in the cortical or medullary layers of lichen thalli. The first step in the pathway is performed by the non-reducing polyketide synthase atr1 that produces 4-O-demethylbarbatic acid composed of two 3-methylorsellinic acid (3MOA) moieties from S-adenosyl-L-methionine (SAM), acetyl-CoA and malonyl-CoA units. The pathway continues with the actions of the cytochrome P450 monooygenase atr2 that catalizes the oxidation of c-9 and the O-methyltransferase atr3 that performs the methylation of the carboxyl group to yield atranorin, via the proatranorin II and III intermediates if atr2 acts first, or the proatranorin I intermediate if atr3 acts first. The chain is Non-reducing polyketide synthase atr1 from Stereocaulon alpinum (Alpine snow lichen).